Consider the following 347-residue polypeptide: Protein RecA (347 aa).

67–74 (GPESSGKT) is a binding site for ATP.

This sequence belongs to the RecA family.

It localises to the cytoplasm. Functionally, can catalyze the hydrolysis of ATP in the presence of single-stranded DNA, the ATP-dependent uptake of single-stranded DNA by duplex DNA, and the ATP-dependent hybridization of homologous single-stranded DNAs. It interacts with LexA causing its activation and leading to its autocatalytic cleavage. This chain is Protein RecA, found in Helicobacter pylori (strain P12).